Reading from the N-terminus, the 1668-residue chain is Kinesin-like protein KIF21B (1668 aa).

The Kinesin motor domain occupies 8-371 (CVKVAVRIRP…LKYANRARNI (364 aa)). ATP is bound at residue 87 to 94 (GQTGAGKT). Residues 372-465 (KNKVVVNQDK…LMSQEANLLL (94 aa)) adopt a coiled-coil conformation. The tract at residues 401–1100 (MEYKAGKRVI…LQALIYNVQH (700 aa)) is interaction with TRIM3. 2 disordered regions span residues 553–629 (KKKE…PEEK) and 837–866 (RVGL…GARS). The segment covering 579–628 (NSEETDENEAEEEEEERDESGCEEEEGREDEDEDSGSEESLVDSDSDPEE) has biased composition (acidic residues). Phosphoserine is present on Ser-580. Residue Thr-583 is modified to Phosphothreonine. The span at 847 to 866 (SGAEVSASTTSSEAESGARS) shows a compositional bias: low complexity. Residues 924–1019 (IIDIVMQRMT…TKEELDSTDT (96 aa)) adopt a coiled-coil conformation. 3 positions are modified to phosphoserine: Ser-1150, Ser-1168, and Ser-1217. Polar residues predominate over residues 1199–1219 (LPTRGSTFPRQSRGATDTSPL). The tract at residues 1199 to 1253 (LPTRGSTFPRQSRGATDTSPLTRRKSYDRGQPIRSTDMGFTPPSSPPTRPRNDRN) is disordered. Phosphothreonine is present on Thr-1239. The residue at position 1243 (Ser-1243) is a Phosphoserine. WD repeat units lie at residues 1308–1345 (GHTK…EIAA), 1348–1386 (GHPN…KCIR), 1412–1450 (QGEH…PIGK), 1453–1495 (GHIG…TGTI), 1504–1541 (PHYD…LIQQ), 1545–1584 (AHKD…PIGE), and 1587–1624 (GHDS…TPCL).

The protein belongs to the TRAFAC class myosin-kinesin ATPase superfamily. Kinesin family. As to quaternary structure, interacts with TRIM3; the interaction positively affects motility of KIF21B. Interacts with GABARAP and GABA(A) receptor subunits: GABRG2, GABRA1 and GABRA2. May interact with GABA(A) receptor subunits: GABRB2 and GABRB3. As to expression, expressed in brain (at protein level). Expressed in spleen and at lower levels in testes.

The protein localises to the cytoplasm. It is found in the cytoskeleton. The protein resides in the cell projection. Its subcellular location is the dendrite. It localises to the growth cone. The protein localises to the axon. It is found in the cytoplasmic vesicle. Its function is as follows. Plus-end directed microtubule-dependent motor protein which displays processive activity. Is involved in regulation of microtubule dynamics, synapse function and neuronal morphology, including dendritic tree branching and spine formation. Plays a role in lerning and memory. Involved in delivery of gamma-aminobutyric acid (GABA(A)) receptor to cell surface. This chain is Kinesin-like protein KIF21B (Kif21b), found in Mus musculus (Mouse).